Consider the following 88-residue polypeptide: UPF0250 protein PM1928 (88 aa).

It belongs to the UPF0250 family.

The protein is UPF0250 protein PM1928 of Pasteurella multocida (strain Pm70).